We begin with the raw amino-acid sequence, 237 residues long: Ribose-5-phosphate isomerase A (237 aa).

Residues 30-33 (SGST), 87-90 (DGAD), and 100-103 (KGGG) each bind substrate. Catalysis depends on glutamate 109, which acts as the Proton acceptor. Position 127 (lysine 127) interacts with substrate.

The protein belongs to the ribose 5-phosphate isomerase family. In terms of assembly, homodimer.

It carries out the reaction aldehydo-D-ribose 5-phosphate = D-ribulose 5-phosphate. Its pathway is carbohydrate degradation; pentose phosphate pathway; D-ribose 5-phosphate from D-ribulose 5-phosphate (non-oxidative stage): step 1/1. Functionally, catalyzes the reversible conversion of ribose-5-phosphate to ribulose 5-phosphate. This is Ribose-5-phosphate isomerase A from Synechococcus sp. (strain RCC307).